A 520-amino-acid polypeptide reads, in one-letter code: GMP synthase [glutamine-hydrolyzing] (520 aa).

In terms of domain architecture, Glutamine amidotransferase type-1 spans 9–202 (TILIIDFGSQ…VHRIVGVKPG (194 aa)). Catalysis depends on Cys-86, which acts as the Nucleophile. Catalysis depends on residues His-176 and Glu-178. The GMPS ATP-PPase domain occupies 203–395 (WTMGAYREQA…LGLPDSFIGR (193 aa)). Residue 230–236 (SGGVDSS) coordinates ATP.

Homodimer.

The enzyme catalyses XMP + L-glutamine + ATP + H2O = GMP + L-glutamate + AMP + diphosphate + 2 H(+). The protein operates within purine metabolism; GMP biosynthesis; GMP from XMP (L-Gln route): step 1/1. Its function is as follows. Catalyzes the synthesis of GMP from XMP. The chain is GMP synthase [glutamine-hydrolyzing] from Brucella ovis (strain ATCC 25840 / 63/290 / NCTC 10512).